The chain runs to 296 residues: mRNA export factor rsm1 (296 aa).

Residues Pro40–Thr174 form a C3HC-type zinc finger.

The protein localises to the cytoplasm. Its subcellular location is the nucleus. Involved in the export of mRNA from the nucleus to the cytoplasm. The sequence is that of mRNA export factor rsm1 (rsm1) from Schizosaccharomyces pombe (strain 972 / ATCC 24843) (Fission yeast).